The following is a 544-amino-acid chain: Chaperonin GroEL (544 aa).

ATP-binding positions include 30 to 33 (TLGP), Lys-51, 87 to 91 (DGTTT), Gly-415, 479 to 481 (NAA), and Asp-495.

It belongs to the chaperonin (HSP60) family. In terms of assembly, forms a cylinder of 14 subunits composed of two heptameric rings stacked back-to-back. Interacts with the co-chaperonin GroES.

Its subcellular location is the cytoplasm. The enzyme catalyses ATP + H2O + a folded polypeptide = ADP + phosphate + an unfolded polypeptide.. In terms of biological role, together with its co-chaperonin GroES, plays an essential role in assisting protein folding. The GroEL-GroES system forms a nano-cage that allows encapsulation of the non-native substrate proteins and provides a physical environment optimized to promote and accelerate protein folding. The protein is Chaperonin GroEL of Francisella tularensis subsp. mediasiatica (strain FSC147).